The chain runs to 270 residues: NAD(P)H-hydrate epimerase (270 aa).

Residues F25–Q234 enclose the YjeF N-terminal domain. D73 to Q77 contributes to the (6S)-NADPHX binding site. Positions 74 and 144 each coordinate K(+). (6S)-NADPHX is bound by residues G148 to H154 and E177. Position 180 (T180) interacts with K(+).

The protein belongs to the NnrE/AIBP family. It depends on K(+) as a cofactor.

The enzyme catalyses (6R)-NADHX = (6S)-NADHX. The catalysed reaction is (6R)-NADPHX = (6S)-NADPHX. Functionally, catalyzes the epimerization of the S- and R-forms of NAD(P)HX, a damaged form of NAD(P)H that is a result of enzymatic or heat-dependent hydration. This is a prerequisite for the S-specific NAD(P)H-hydrate dehydratase to allow the repair of both epimers of NAD(P)HX. The polypeptide is NAD(P)H-hydrate epimerase (Legionella pneumophila (strain Paris)).